A 1583-amino-acid chain; its full sequence is Methyl-CpG-binding domain protein 5/6 homolog sba (1583 aa).

The interval 81–115 is disordered; it reads AVHQQQQQHHHQQQQQQQHQQQQQILPAGLVNGNG. Low complexity predominate over residues 83-104; the sequence is HQQQQQHHHQQQQQQQHQQQQQ. Residues 238 to 308 enclose the MBD domain; the sequence is RKTATSYNGN…YLFDFNAQVP (71 aa). Disordered stretches follow at residues 427–457, 556–579, 630–694, 839–862, 940–980, 1179–1247, and 1287–1339; these read NKLPATNRTATTPTPAPTPPPQHPNGMPTSQ, EPIVHSSQQQQQQQQQQLQQQQQL, VTLV…QTQV, AELHPQPGGGYIVSQPSPVAAASS, PPAQ…ISPQ, VMSR…RSIC, and QESP…SFPL. Low complexity predominate over residues 430 to 439; the sequence is PATNRTATTP. Over residues 440–449 the composition is skewed to pro residues; it reads TPAPTPPPQH. Residues 563 to 579 show a composition bias toward low complexity; that stretch reads QQQQQQQQQQLQQQQQL. The span at 658 to 677 shows a compositional bias: polar residues; it reads AISTSHESPRQSLSSPTDSV. Low complexity-rich tracts occupy residues 679-693 and 851-862; these read SAKSTPSASPKPQTQ and VSQPSPVAAASS. Composition is skewed to polar residues over residues 1179-1195, 1216-1240, and 1287-1313; these read VMSRQGTAASPPDTTTC, CVSSSEPDAAVSPQSTESRQSPSST, and QESPTTTQLLSSVPTAQPTVEKTTVRT. The span at 1323-1333 shows a compositional bias: low complexity; the sequence is RGAARAAPSAS. The 63-residue stretch at 1346-1408 folds into the PWWP domain; it reads IGELIWGPAR…VNSLQSLSEG (63 aa). Positions 1415 to 1446 form a coiled coil; that stretch reads AQKDTRKSRKLNSQLERAIQEAMTELDNISAS. The segment at 1471–1497 is disordered; sequence IGGQQQYQQQQQQQQQQQSPSSTNNKI. Residues 1474–1488 are compositionally biased toward low complexity; sequence QQQYQQQQQQQQQQQ.

As to quaternary structure, component of the polycomb repressive deubiquitinase (PR-DUB) complex, at least composed of caly/calypso, Asx and sba (MDB5/6 homolog). Interacts (via MBD domain) with Asx (via PHD domain); the interaction is important for the stability of the PR-DUB complex.

Functionally, non-catalytic component of the polycomb repressive deubiquitinase (PR-DUB) complex, a complex that specifically mediates deubiquitination of histone H2A monoubiquitinated at 'Lys-119' (H2AK118ub1). Important for maintaining stability of the PR-DUB complex. Probable epigenetic regulator involved in developmental pattern formation and eye development. The protein is Methyl-CpG-binding domain protein 5/6 homolog sba of Drosophila melanogaster (Fruit fly).